The sequence spans 854 residues: Transcription factor asR3 (854 aa).

Positions 19-45 (CWECRRRKIKCDRNDPCAHCIRHETQC) form a DNA-binding region, zn(2)-C6 fungal-type. The interval 56–156 (TDSDVSRTRP…SLSTNTSPSA (101 aa)) is disordered. Composition is skewed to polar residues over residues 78 to 90 (ASGS…TRPS) and 125 to 145 (LNPS…SSRG). Positions 146 to 156 (PSLSTNTSPSA) are enriched in low complexity.

The protein localises to the nucleus. Its function is as follows. Transcription factor; part of the gene cluster that mediates the biosynthesis of xenovulene A, an unusual meroterpenoid that has potent inhibitory effects on the human gamma-aminobutyrate A (GABAA) benzodiazepine receptor. This Sarocladium schorii (Acremonium strictum (strain IMI 501407)) protein is Transcription factor asR3.